Here is a 233-residue protein sequence, read N- to C-terminus: Protein Thf1 (233 aa).

Positions 183-205 (DKLSKDLELYRSNLDKMTQALAV) form a coiled coil. The segment at 213 to 233 (DRKKREQRQQQASTPVAPPNE) is disordered.

Belongs to the THF1 family.

Its function is as follows. May be involved in photosynthetic membrane biogenesis. The sequence is that of Protein Thf1 from Trichormus variabilis (strain ATCC 29413 / PCC 7937) (Anabaena variabilis).